Here is a 1578-residue protein sequence, read N- to C-terminus: Cilia- and flagella-associated protein 74 (1578 aa).

Over residues 1–14 (MEEPTVQFSDEDLV) the composition is skewed to acidic residues. 2 disordered regions span residues 1 to 21 (MEEP…PPMD) and 33 to 67 (EVER…TTKD). The span at 33-65 (EVERPSEGLEDEGSHSSAKKESKGAEKMRKSTT) shows a compositional bias: basic and acidic residues. Coiled coils occupy residues 103–156 (RQRM…QSKI) and 330–378 (KYLF…RRQH).

This sequence belongs to the CFAP74 family.

The protein localises to the cytoplasm. It is found in the cytoskeleton. It localises to the cilium axoneme. Its subcellular location is the flagellum axoneme. As part of the central apparatus of the cilium axoneme may play a role in cilium movement. May play an important role in sperm architecture and function. The protein is Cilia- and flagella-associated protein 74 of Mus musculus (Mouse).